The primary structure comprises 288 residues: Fibroblast growth factor 2 (288 aa).

The interval 1-133 is disordered; the sequence is MVGVGGGDVE…RGSRPGPAGT (133 aa). A propeptide spans 1–142 (or 93, or 124, or 125, or 131, or 161); it reads MVGVGGGDVE…TMAAGSITTL (142 aa). A compositionally biased stretch (low complexity) spans 52 to 64; it reads SVNPRSRAAGSPR. Positions 68–84 are enriched in basic and acidic residues; sequence RRTEERPSGSRLGDRGR. Omega-N-methylarginine; alternate is present on residues Arg-108, Arg-110, and Arg-112. A symmetric dimethylarginine; alternate mark is found at Arg-108, Arg-110, and Arg-112. Positions 113–132 are enriched in low complexity; that stretch reads GTAAPRAAPAARGSRPGPAG. Asn-169 lines the heparin pocket. The short motif at 179–181 is the Cell attachment site; atypical element; sequence DGR. Tyr-215 is subject to Phosphotyrosine; by TEC. A Cell attachment site; atypical motif is present at residues 221-223; it reads DGR. A Glycyl lysine isopeptide (Lys-Gly) (interchain with G-Cter in SUMO1) cross-link involves residue Lys-228. A heparin-binding region spans residues 261 to 277; it reads KRTGQYKLGSKTGPGQK.

Belongs to the heparin-binding growth factors family. In terms of assembly, monomer. Homodimer. Interacts with FGFR1, FGFR2, FGFR3 and FGFR4. Affinity between fibroblast growth factors (FGFs) and their receptors is increased by heparan sulfate glycosaminoglycans that function as coreceptors. Interacts with CSPG4, FGFBP1 and TEC. Found in a complex with FGFBP1, FGF1 and FGF2. Interacts with FGFBP3. Interacts with integrin ITGAV:ITGB3; the interaction is required for FGF2 signaling. Interacts with SNORC (via the extracellular domain). Interacts with glypican GPC3. Post-translationally, phosphorylation at Tyr-215 regulates FGF2 unconventional secretion. Several N-termini starting at positions 94, 125, 126, 132, 143 and 162 have been identified by direct sequencing. In terms of tissue distribution, expressed in granulosa and cumulus cells. Expressed in hepatocellular carcinoma cells, but not in non-cancerous liver tissue.

The protein resides in the secreted. It is found in the nucleus. In terms of biological role, acts as a ligand for FGFR1, FGFR2, FGFR3 and FGFR4. Also acts as an integrin ligand which is required for FGF2 signaling. Binds to integrin ITGAV:ITGB3. Plays an important role in the regulation of cell survival, cell division, cell differentiation and cell migration. Functions as a potent mitogen in vitro. Can induce angiogenesis. Mediates phosphorylation of ERK1/2 and thereby promotes retinal lens fiber differentiation. This chain is Fibroblast growth factor 2 (FGF2), found in Homo sapiens (Human).